The chain runs to 177 residues: Ribosome maturation factor RimM (177 aa).

In terms of domain architecture, PRC barrel spans 92 to 166 (EDTFYHADLM…RIVVVPDTNP (75 aa)).

The protein belongs to the RimM family. In terms of assembly, binds ribosomal protein uS19.

It is found in the cytoplasm. Functionally, an accessory protein needed during the final step in the assembly of 30S ribosomal subunit, possibly for assembly of the head region. Essential for efficient processing of 16S rRNA. May be needed both before and after RbfA during the maturation of 16S rRNA. It has affinity for free ribosomal 30S subunits but not for 70S ribosomes. The chain is Ribosome maturation factor RimM from Azorhizobium caulinodans (strain ATCC 43989 / DSM 5975 / JCM 20966 / LMG 6465 / NBRC 14845 / NCIMB 13405 / ORS 571).